The primary structure comprises 562 residues: NAD-dependent malic enzyme 1 (562 aa).

The active-site Proton donor is the Tyr101. Arg154 lines the NAD(+) pocket. Catalysis depends on Lys172, which acts as the Proton acceptor. A divalent metal cation-binding residues include Glu243, Asp244, and Asp267. Residues Asp267 and Asn415 each coordinate NAD(+).

The protein belongs to the malic enzymes family. As to quaternary structure, homotetramer. Mg(2+) serves as cofactor. Requires Mn(2+) as cofactor.

It catalyses the reaction (S)-malate + NAD(+) = pyruvate + CO2 + NADH. The catalysed reaction is oxaloacetate + H(+) = pyruvate + CO2. This is NAD-dependent malic enzyme 1 from Vibrio vulnificus (strain YJ016).